The sequence spans 108 residues: Pumilarin (108 aa).

The propeptide occupies 1-38; sequence MTETKNEIKLHVLFGALAVGFLMLALFSFSLQMLPVAD. Positions 39–108 form a cross-link, cyclopeptide (Leu-Trp); the sequence is LAKEFGIPGS…KKGRKAVIAW (70 aa).

Post-translationally, the cross-link permits a high resistance to proteolysis. Is more resistant to specific proteases than to unspecific proteases.

The protein localises to the secreted. Cyclopeptide antibiotic that inhibits both Gram-positive and Gram-negative bacteria. Shows potent to weak activities against M.flavus (MIC=3 ug/ml), B.cereus (MIC=12 ug/ml), B.pumilus (MIC=12 ug/ml), E.coli (MIC=12 ug/ml), and S.pneumoniae (MIC=47 ug/ml). May act by forming pores. The polypeptide is Pumilarin (Bacillus safensis).